The primary structure comprises 423 residues: D-tagatose-1,6-bisphosphate aldolase subunit GatZ (423 aa).

It belongs to the GatZ/KbaZ family. GatZ subfamily. Forms a complex with GatY.

Its pathway is carbohydrate metabolism; D-tagatose 6-phosphate degradation; D-glyceraldehyde 3-phosphate and glycerone phosphate from D-tagatose 6-phosphate: step 2/2. Functionally, component of the tagatose-1,6-bisphosphate aldolase GatYZ that is required for full activity and stability of the Y subunit. Could have a chaperone-like function for the proper and stable folding of GatY. When expressed alone, GatZ does not show any aldolase activity. Is involved in the catabolism of galactitol. The protein is D-tagatose-1,6-bisphosphate aldolase subunit GatZ of Salmonella agona (strain SL483).